Reading from the N-terminus, the 584-residue chain is Kinesin-like protein KIN-10C (584 aa).

The 314-residue stretch at 11-324 (PVRVVLRVRP…VSLAARSRHV (314 aa)) folds into the Kinesin motor domain. Residue 99 to 106 (GATGSGKT) participates in ATP binding. 2 disordered regions span residues 377–398 (SMSHKKQSASGRVSGRGKAMDQ) and 445–469 (DKTGSSLRKALSPISSNMDPQKQRT).

This sequence belongs to the TRAFAC class myosin-kinesin ATPase superfamily. Kinesin family. KIN-10 subfamily.

This is Kinesin-like protein KIN-10C from Oryza sativa subsp. japonica (Rice).